The following is a 317-amino-acid chain: L-lactate dehydrogenase (317 aa).

NAD(+)-binding positions include valine 17, aspartate 38, lysine 43, tyrosine 69, and 83-84 (GA). Residues glutamine 86 and arginine 92 each coordinate substrate. NAD(+)-binding positions include serine 105, 122–124 (ATN), and serine 147. Residue 124–127 (NPVD) coordinates substrate. 152–155 (DTAR) contributes to the substrate binding site. Beta-D-fructose 1,6-bisphosphate-binding residues include arginine 157 and histidine 172. Histidine 179 serves as the catalytic Proton acceptor. Tyrosine 224 carries the phosphotyrosine modification. Residue threonine 233 participates in substrate binding.

This sequence belongs to the LDH/MDH superfamily. LDH family. In terms of assembly, homotetramer.

The protein resides in the cytoplasm. It catalyses the reaction (S)-lactate + NAD(+) = pyruvate + NADH + H(+). It participates in fermentation; pyruvate fermentation to lactate; (S)-lactate from pyruvate: step 1/1. Allosterically activated by fructose 1,6-bisphosphate (FBP). In terms of biological role, catalyzes the conversion of lactate to pyruvate. This is L-lactate dehydrogenase from Bacillus caldotenax.